The sequence spans 57 residues: Putative antitoxin VapB4 (57 aa).

Possibly the antitoxin component of a type II toxin-antitoxin (TA) system. Its cognate toxin is VapC4 (Potential). The polypeptide is Putative antitoxin VapB4 (vapB4) (Methanocaldococcus jannaschii (strain ATCC 43067 / DSM 2661 / JAL-1 / JCM 10045 / NBRC 100440) (Methanococcus jannaschii)).